Reading from the N-terminus, the 498-residue chain is WD repeat-containing protein 55 homolog (498 aa).

Positions 1–133 are disordered; sequence MHTHNNFKTP…TFDLDEDDET (133 aa). Composition is skewed to acidic residues over residues 12–23, 31–48, and 83–95; these read DEDELDDLDEDM, IEQE…EYDL, and SDSD…DAGD. The span at 114 to 123 shows a compositional bias: polar residues; sequence PSGSNRQSEA. WD repeat units lie at residues 155-194, 199-238, 242-280, 283-322, 325-364, and 409-448; these read KLED…NKLL, VHSK…LKKL, AHDD…AIFE, ELED…MYVQ, PYEE…YHCD, and QHNM…DFGD.

The protein belongs to the WD repeat WDR55 family.

This Drosophila erecta (Fruit fly) protein is WD repeat-containing protein 55 homolog.